A 389-amino-acid chain; its full sequence is Chalcone synthase 1 (389 aa).

The active site involves Cys-164.

Belongs to the thiolase-like superfamily. Chalcone/stilbene synthases family.

It catalyses the reaction (E)-4-coumaroyl-CoA + 3 malonyl-CoA + 3 H(+) = 2',4,4',6'-tetrahydroxychalcone + 3 CO2 + 4 CoA. The protein operates within secondary metabolite biosynthesis; flavonoid biosynthesis. The primary product of this enzyme is 4,2',4',6'-tetrahydroxychalcone (also termed naringenin-chalcone or chalcone) which can under specific conditions spontaneously isomerize into naringenin. The chain is Chalcone synthase 1 (CHS1) from Medicago sativa (Alfalfa).